A 219-amino-acid chain; its full sequence is Thiopurine S-methyltransferase (219 aa).

S-adenosyl-L-methionine is bound by residues Trp10, Leu45, Glu66, and Arg123.

This sequence belongs to the class I-like SAM-binding methyltransferase superfamily. TPMT family.

The protein localises to the cytoplasm. It catalyses the reaction S-adenosyl-L-methionine + a thiopurine = S-adenosyl-L-homocysteine + a thiopurine S-methylether.. The chain is Thiopurine S-methyltransferase from Bordetella petrii (strain ATCC BAA-461 / DSM 12804 / CCUG 43448).